The following is a 36-amino-acid chain: Conotoxin Bt11.4 (36 aa).

Intrachain disulfides connect Cys2/Cys16, Cys9/Cys21, Cys15/Cys26, and Cys20/Cys33.

Belongs to the conotoxin I1 superfamily. Expressed by the venom duct.

It is found in the secreted. In Conus betulinus (Beech cone), this protein is Conotoxin Bt11.4.